The primary structure comprises 79 residues: Conotoxin Vi6.4 (79 aa).

The signal sequence occupies residues 1–22; that stretch reads MKLTCVLIITVLFLTASQLITA. A propeptide spanning residues 23-47 is cleaved from the precursor; it reads DYSGDKRQYRAVRLRDEMRNFKGAR. Disulfide bonds link C49-C62, C56-C67, and C61-C77. 4-hydroxyproline occurs at positions 60 and 63.

This sequence belongs to the conotoxin O1 superfamily. Expressed by the venom duct.

The protein resides in the secreted. Its function is as follows. Ion channel inhibitor that inhibits the increase in intracellular calcium upon depolarization in DRG neurons. In vivo, both intraperitoneal and intracranial injections into mice induce hyperactivity. This is Conotoxin Vi6.4 from Conus virgo (Virgin cone).